The sequence spans 1099 residues: MPKREDIKRILVIGSGPITIGQAAEFDYSGTQALKALKSAGYEVIIVNSNSATIMTDPEFSDAVYIEPLTVEFLEKIIEKERPDALLPTLGGQTALNLAVELAERGILDKYGVQLIGAKLESIKKAEDRELFKETMEKAGLEVLRSRLVNNLADALETAREFGYPVIIRPSFTLGGTGGGIAFNEEELRDIVTKGLIESPVHTVLIEESVLGWKEYELEVVRDGAGNFIVVCSIENLDPMGIHTGDSITVAPAQTLTDVEYQRMRDAAYKVIDAIGIETGGSNIQFALDPETGRMVVIEMNPRVSRSSALASKATGYPIAKVAALLAVGFTLDEIPNYITGKTMAAFEPSIDYVVVKIPRFQLEKFPGADPRLNTQMKSVGEVMAIGRTFKEALGKALRSLELDAAPKLDLEHIREHLANPTPERISYVFAAFRNGMDVEEVHELTKIDRWFLREMKACIELEEELKLKKFDVEILKKAKQWGYSDREIAEIWGVSEKEIRKMREDNRIFPVYKMVDTCAAEFEAQTPYYYSTYNGVENEAVPSDREKIMILGSGPNRIGQGIEFDYTNVHGVWSFQEEGYETIMVNSNPETVSTDYDTSDRLYFEPLTVEDVLEIVRNEKPKGVVVAFGGQTPLKIAKYLVEEKVNIIGTSFESIEIAEDREKFAKLLKQIGLKCPPFGTASSVEEALRVAENLGYPVLVRPSYVLGGRAMAIVDTPQELEMYVKEAAVVSPGYPVLIDKFLEDAIELDVDVVSDGKYVWIAGLMEQIEEAGVHSGDSACVLPPVSLSEKLVEEIEETVYKLVKALKIVGVANIQLAVKDEEIYIIEANPRASRTVPFVSKAIGIPVARIAAKIMVGRNLPELLSEYFPYPTRPGVKVDKLDESEILPTPWPKMFSVKEVVIPFHKFPGTDVLLGPEMRSTGEVMGIGEDFAEAFAKAQIAAGNPLPTTGAILATVADKDKREAVPLLAHLADMGFEIYATRGTAKALQSHGVEVKVVPKVGEGRPDVIDLLEQGKISLVVITQSSDEPALVAVSHGKEPFKVEGRRTVGYMIRTTALKRKIPYLTTVESLRAAVAAIRKMKKGSIVKVRRLTDTWKM.

The interval 1 to 402 (MPKREDIKRI…ALGKALRSLE (402 aa)) is carboxyphosphate synthetic domain. ATP-binding residues include Arg129, Arg169, Gly175, Gly176, Glu208, Val210, Glu215, Gly241, Ile242, His243, Gln285, and Glu299. The ATP-grasp 1 domain maps to 133–328 (KETMEKAGLE…IAKVAALLAV (196 aa)). Residues Gln285, Glu299, and Asn301 each coordinate Mg(2+). Mn(2+) contacts are provided by Gln285, Glu299, and Asn301. Positions 403-541 (LDAAPKLDLE…STYNGVENEA (139 aa)) are oligomerization domain. Residues 542–944 (VPSDREKIMI…AFAKAQIAAG (403 aa)) form a carbamoyl phosphate synthetic domain region. Positions 666 to 857 (AKLLKQIGLK…VARIAAKIMV (192 aa)) constitute an ATP-grasp 2 domain. ATP is bound by residues Arg702, Lys741, Leu743, Glu748, Gly773, Val774, His775, Ser776, Gln816, and Glu828. Residues Gln816, Glu828, and Asn830 each contribute to the Mg(2+) site. Residues Gln816, Glu828, and Asn830 each coordinate Mn(2+). The MGS-like domain maps to 945–1099 (NPLPTTGAIL…VRRLTDTWKM (155 aa)). Residues 945–1099 (NPLPTTGAIL…VRRLTDTWKM (155 aa)) are allosteric domain.

This sequence belongs to the CarB family. Composed of two chains; the small (or glutamine) chain promotes the hydrolysis of glutamine to ammonia, which is used by the large (or ammonia) chain to synthesize carbamoyl phosphate. Tetramer of heterodimers (alpha,beta)4. Mg(2+) is required as a cofactor. The cofactor is Mn(2+).

The enzyme catalyses hydrogencarbonate + L-glutamine + 2 ATP + H2O = carbamoyl phosphate + L-glutamate + 2 ADP + phosphate + 2 H(+). The catalysed reaction is hydrogencarbonate + NH4(+) + 2 ATP = carbamoyl phosphate + 2 ADP + phosphate + 2 H(+). Its pathway is amino-acid biosynthesis; L-arginine biosynthesis; carbamoyl phosphate from bicarbonate: step 1/1. The protein operates within pyrimidine metabolism; UMP biosynthesis via de novo pathway; (S)-dihydroorotate from bicarbonate: step 1/3. Large subunit of the glutamine-dependent carbamoyl phosphate synthetase (CPSase). CPSase catalyzes the formation of carbamoyl phosphate from the ammonia moiety of glutamine, carbonate, and phosphate donated by ATP, constituting the first step of 2 biosynthetic pathways, one leading to arginine and/or urea and the other to pyrimidine nucleotides. The large subunit (synthetase) binds the substrates ammonia (free or transferred from glutamine from the small subunit), hydrogencarbonate and ATP and carries out an ATP-coupled ligase reaction, activating hydrogencarbonate by forming carboxy phosphate which reacts with ammonia to form carbamoyl phosphate. This is Carbamoyl phosphate synthase large chain from Thermotoga petrophila (strain ATCC BAA-488 / DSM 13995 / JCM 10881 / RKU-1).